The following is a 339-amino-acid chain: Glucokinase (339 aa).

16–21 (GDIGGT) provides a ligand contact to ATP.

The protein belongs to the bacterial glucokinase family.

The protein resides in the cytoplasm. It carries out the reaction D-glucose + ATP = D-glucose 6-phosphate + ADP + H(+). This Rhizobium meliloti (strain 1021) (Ensifer meliloti) protein is Glucokinase.